Consider the following 204-residue polypeptide: LexA repressor (204 aa).

The segment at residues 31–51 is a DNA-binding region (H-T-H motif); the sequence is VREICAKVGLSSTSTVHGHLS. Active-site for autocatalytic cleavage activity residues include Ser-128 and Lys-165.

The protein belongs to the peptidase S24 family. Homodimer.

The catalysed reaction is Hydrolysis of Ala-|-Gly bond in repressor LexA.. Functionally, represses a number of genes involved in the response to DNA damage (SOS response), including recA and lexA. In the presence of single-stranded DNA, RecA interacts with LexA causing an autocatalytic cleavage which disrupts the DNA-binding part of LexA, leading to derepression of the SOS regulon and eventually DNA repair. This chain is LexA repressor, found in Clostridium acetobutylicum (strain ATCC 824 / DSM 792 / JCM 1419 / IAM 19013 / LMG 5710 / NBRC 13948 / NRRL B-527 / VKM B-1787 / 2291 / W).